We begin with the raw amino-acid sequence, 45 residues long: Keratin-associated protein 22-2 (45 aa).

It belongs to the KRTAP type 20 family. In terms of assembly, interacts with hair keratins.

In terms of biological role, in the hair cortex, hair keratin intermediate filaments are embedded in an interfilamentous matrix, consisting of hair keratin-associated proteins (KRTAP), which are essential for the formation of a rigid and resistant hair shaft through their extensive disulfide bond cross-linking with abundant cysteine residues of hair keratins. The matrix proteins include the high-sulfur and high-glycine-tyrosine keratins. The protein is Keratin-associated protein 22-2 (KRTAP22-2) of Homo sapiens (Human).